The following is a 193-amino-acid chain: uncharacterized protein (193 aa).

This is an uncharacterized protein from Methanocaldococcus jannaschii (strain ATCC 43067 / DSM 2661 / JAL-1 / JCM 10045 / NBRC 100440) (Methanococcus jannaschii).